Here is a 632-residue protein sequence, read N- to C-terminus: tRNA uridine 5-carboxymethylaminomethyl modification enzyme MnmG (632 aa).

FAD is bound by residues 15-20 (GAGHAG), V127, and S182. A disordered region spans residues 203-226 (TPPRVKSSTIDYSKTEEQPGDDHP). Residues 215 to 226 (SKTEEQPGDDHP) show a composition bias toward basic and acidic residues. 274–288 (GARYCPSIEDKIVRF) contacts NAD(+). Q371 provides a ligand contact to FAD.

This sequence belongs to the MnmG family. In terms of assembly, homodimer. Heterotetramer of two MnmE and two MnmG subunits. FAD is required as a cofactor.

The protein localises to the cytoplasm. Functionally, NAD-binding protein involved in the addition of a carboxymethylaminomethyl (cmnm) group at the wobble position (U34) of certain tRNAs, forming tRNA-cmnm(5)s(2)U34. This chain is tRNA uridine 5-carboxymethylaminomethyl modification enzyme MnmG, found in Listeria monocytogenes serotype 4b (strain F2365).